We begin with the raw amino-acid sequence, 300 residues long: Probable alpha-L-glutamate ligase (300 aa).

The region spanning 104 to 287 is the ATP-grasp domain; sequence LQLLARQGID…IAGRMIQWIE (184 aa). Residues K141, 178 to 179, D187, and 211 to 213 contribute to the ATP site; these read EY and RSN. D248, E260, and N262 together coordinate Mg(2+). 3 residues coordinate Mn(2+): D248, E260, and N262.

The protein belongs to the RimK family. Mg(2+) is required as a cofactor. The cofactor is Mn(2+).

This is Probable alpha-L-glutamate ligase from Citrobacter koseri (strain ATCC BAA-895 / CDC 4225-83 / SGSC4696).